Here is a 371-residue protein sequence, read N- to C-terminus: tRNA-specific 2-thiouridylase MnmA (371 aa).

ATP contacts are provided by residues 11 to 18 and methionine 37; that span reads GMSGGVDS. The segment at 97 to 99 is interaction with target base in tRNA; it reads NPD. The active-site Nucleophile is cysteine 102. A disulfide bridge links cysteine 102 with cysteine 199. Glycine 127 is a binding site for ATP. The interaction with tRNA stretch occupies residues 149 to 151; sequence KDQ. The active-site Cysteine persulfide intermediate is the cysteine 199. The tract at residues 311 to 312 is interaction with tRNA; sequence RY.

The protein belongs to the MnmA/TRMU family.

The protein localises to the cytoplasm. The catalysed reaction is S-sulfanyl-L-cysteinyl-[protein] + uridine(34) in tRNA + AH2 + ATP = 2-thiouridine(34) in tRNA + L-cysteinyl-[protein] + A + AMP + diphosphate + H(+). Its function is as follows. Catalyzes the 2-thiolation of uridine at the wobble position (U34) of tRNA, leading to the formation of s(2)U34. This is tRNA-specific 2-thiouridylase MnmA from Idiomarina loihiensis (strain ATCC BAA-735 / DSM 15497 / L2-TR).